The chain runs to 176 residues: NAD(P)H-quinone oxidoreductase subunit 6, chloroplastic (176 aa).

5 helical membrane passes run Phe-10–Thr-30, Pro-32–Leu-52, Ala-61–Met-81, Leu-92–Ile-112, and Phe-152–Ala-172.

The protein belongs to the complex I subunit 6 family. As to quaternary structure, NDH is composed of at least 16 different subunits, 5 of which are encoded in the nucleus.

Its subcellular location is the plastid. It localises to the chloroplast thylakoid membrane. The catalysed reaction is a plastoquinone + NADH + (n+1) H(+)(in) = a plastoquinol + NAD(+) + n H(+)(out). It carries out the reaction a plastoquinone + NADPH + (n+1) H(+)(in) = a plastoquinol + NADP(+) + n H(+)(out). NDH shuttles electrons from NAD(P)H:plastoquinone, via FMN and iron-sulfur (Fe-S) centers, to quinones in the photosynthetic chain and possibly in a chloroplast respiratory chain. The immediate electron acceptor for the enzyme in this species is believed to be plastoquinone. Couples the redox reaction to proton translocation, and thus conserves the redox energy in a proton gradient. The sequence is that of NAD(P)H-quinone oxidoreductase subunit 6, chloroplastic (ndhG) from Gossypium hirsutum (Upland cotton).